Consider the following 249-residue polypeptide: Enolase-phosphatase E1 (249 aa).

It belongs to the HAD-like hydrolase superfamily. MasA/MtnC family. In terms of assembly, monomer. Mg(2+) is required as a cofactor.

The catalysed reaction is 5-methylsulfanyl-2,3-dioxopentyl phosphate + H2O = 1,2-dihydroxy-5-(methylsulfanyl)pent-1-en-3-one + phosphate. It functions in the pathway amino-acid biosynthesis; L-methionine biosynthesis via salvage pathway; L-methionine from S-methyl-5-thio-alpha-D-ribose 1-phosphate: step 3/6. The protein operates within amino-acid biosynthesis; L-methionine biosynthesis via salvage pathway; L-methionine from S-methyl-5-thio-alpha-D-ribose 1-phosphate: step 4/6. Its function is as follows. Bifunctional enzyme that catalyzes the enolization of 2,3-diketo-5-methylthiopentyl-1-phosphate (DK-MTP-1-P) into the intermediate 2-hydroxy-3-keto-5-methylthiopentenyl-1-phosphate (HK-MTPenyl-1-P), which is then dephosphorylated to form the acireductone 1,2-dihydroxy-3-keto-5-methylthiopentene (DHK-MTPene). The sequence is that of Enolase-phosphatase E1 from Synechococcus sp. (strain CC9605).